The following is a 79-amino-acid chain: CDC42 small effector protein 1 (79 aa).

S-palmitoyl cysteine attachment occurs at residues Cys10 and Cys11. In terms of domain architecture, CRIB spans 30–43; that stretch reads IGEPMNFVHLTHIG. The interval 48–79 is disordered; the sequence is GAGDGLAMTGAVQEQMRSKGNRDRPWSNSRGL. Basic and acidic residues predominate over residues 63–72; sequence MRSKGNRDRP.

The protein belongs to the CDC42SE/SPEC family. In terms of assembly, interacts with CDC42 (in GTP-bound form). Interacts weakly with RAC1 and not at all with RHOA.

The protein resides in the cytoplasm. It localises to the cytoskeleton. The protein localises to the cell membrane. Its function is as follows. Probably involved in the organization of the actin cytoskeleton by acting downstream of CDC42, inducing actin filament assembly. Alters CDC42-induced cell shape changes. In activated T-cells, may play a role in CDC42-mediated F-actin accumulation at the immunological synapse. May play a role in early contractile events in phagocytosis in macrophages. The polypeptide is CDC42 small effector protein 1 (CDC42SE1) (Bos taurus (Bovine)).